The chain runs to 73 residues: Sodium channel neurotoxin MeuNaTxalpha-13 (73 aa).

Positions 1 to 5 are cleaved as a signal peptide; sequence TGVES. In terms of domain architecture, LCN-type CS-alpha/beta spans 7–71; that stretch reads RDAYIAKPHN…VPIRIPGKCH (65 aa). 4 cysteine pairs are disulfide-bonded: Cys17–Cys70, Cys21–Cys43, Cys29–Cys53, and Cys33–Cys55. Residues 72-73 constitute a propeptide, removed by a carboxypeptidase; that stretch reads RR.

This sequence belongs to the long (4 C-C) scorpion toxin superfamily. Sodium channel inhibitor family. Alpha subfamily. In terms of tissue distribution, expressed by the venom gland.

It is found in the secreted. Alpha toxins bind voltage-independently at site-3 of sodium channels (Nav) and inhibit the inactivation of the activated channels, thereby blocking neuronal transmission. This is Sodium channel neurotoxin MeuNaTxalpha-13 from Mesobuthus eupeus (Lesser Asian scorpion).